Consider the following 208-residue polypeptide: Cytochrome c biogenesis ATP-binding export protein CcmA (208 aa).

An ABC transporter domain is found at 2–206 (LEAKELTCAR…IRLTAEGRDE (205 aa)). 34–41 (GPNGAGKT) lines the ATP pocket.

It belongs to the ABC transporter superfamily. CcmA exporter (TC 3.A.1.107) family. In terms of assembly, the complex is composed of two ATP-binding proteins (CcmA) and two transmembrane proteins (CcmB).

It localises to the cell inner membrane. The enzyme catalyses heme b(in) + ATP + H2O = heme b(out) + ADP + phosphate + H(+). Functionally, part of the ABC transporter complex CcmAB involved in the biogenesis of c-type cytochromes; once thought to export heme, this seems not to be the case, but its exact role is uncertain. Responsible for energy coupling to the transport system. The protein is Cytochrome c biogenesis ATP-binding export protein CcmA of Tatumella citrea (Pantoea citrea).